The sequence spans 1091 residues: Ubiquitin carboxyl-terminal hydrolase 36 (1091 aa).

A disordered region spans residues 115–152 (ANGHDNNGRKLSDHPNQNHNHANPNGHHANPNELPKPK). A compositionally biased stretch (low complexity) spans 128–146 (HPNQNHNHANPNGHHANPN). The region spanning 176-484 (SGMINAGNTC…NAYIMFYELD (309 aa)) is the USP domain. Cys185 (nucleophile) is an active-site residue. The active-site Proton acceptor is the His443. Phosphoserine is present on residues Ser518 and Ser522. Disordered stretches follow at residues 523 to 572 (PAKF…KSPL), 594 to 892 (PTAN…ELLK), 972 to 1007 (QRDL…GYNP), and 1068 to 1091 (LAAG…QQQS). Polar residues predominate over residues 547–572 (TTIQFKPQHQPSHQQNGVQQSAKSPL). The segment covering 594–612 (PTANGNKSSSNHSNHKSVN) has biased composition (low complexity). Over residues 643–652 (KMDDCMDSGK) the composition is skewed to basic and acidic residues. Low complexity predominate over residues 653–667 (PKSPVKTPVKTPLKS). Phosphothreonine is present on residues Thr659 and Thr663. Phosphoserine occurs at positions 673 and 675. Residues 691-702 (RSSDSSDSEHEP) show a composition bias toward basic and acidic residues. Residues 703 to 727 (TTSSVQLNGHSKTNGSLSNGSSKST) show a composition bias toward polar residues. Position 749 is a phosphoserine (Ser749). The segment covering 749–759 (SEDDDDDEDEP) has biased composition (acidic residues). Low complexity predominate over residues 769–780 (PQKQSQSQSRSG). Positions 781–790 (PPSPKTPPSP) are enriched in pro residues. Ser783 bears the Phosphoserine mark. Residue Thr786 is modified to Phosphothreonine. Residue Ser789 is modified to Phosphoserine. A compositionally biased stretch (acidic residues) spans 806 to 821 (DGDDDEDDDDDDDEVV). Thr829 carries the post-translational modification Phosphothreonine. Polar residues-rich tracts occupy residues 838–850 (FASS…SPTT) and 863–886 (AIKT…NGGT). Ser847 bears the Phosphoserine mark. Thr850 carries the phosphothreonine modification.

Belongs to the peptidase C19 family. In terms of assembly, interacts with atms/PAF1, but not with CycT.

It is found in the nucleus. The protein localises to the nucleolus. The catalysed reaction is Thiol-dependent hydrolysis of ester, thioester, amide, peptide and isopeptide bonds formed by the C-terminal Gly of ubiquitin (a 76-residue protein attached to proteins as an intracellular targeting signal).. Its function is as follows. Required for maintaining multiple types of adult stem cells, including male and female germline, epithelial follicle cell and intestinal stem cells. May function as a transcriptional repressor by continually deubiquiting histone H2B at the promoters of genes critical for cellular differentiation, thereby preventing histone H3 'Lys-4' trimethylation (H3K4). Controls selective autophagy activation by ubiquitinated proteins. The polypeptide is Ubiquitin carboxyl-terminal hydrolase 36 (Usp36) (Drosophila ananassae (Fruit fly)).